The following is a 98-amino-acid chain: Co-chaperonin GroES (98 aa).

Belongs to the GroES chaperonin family. As to quaternary structure, heptamer of 7 subunits arranged in a ring. Interacts with the chaperonin GroEL.

It is found in the cytoplasm. Its function is as follows. Together with the chaperonin GroEL, plays an essential role in assisting protein folding. The GroEL-GroES system forms a nano-cage that allows encapsulation of the non-native substrate proteins and provides a physical environment optimized to promote and accelerate protein folding. GroES binds to the apical surface of the GroEL ring, thereby capping the opening of the GroEL channel. This Bartonella quintana (strain Toulouse) (Rochalimaea quintana) protein is Co-chaperonin GroES.